Here is a 115-residue protein sequence, read N- to C-terminus: NADH-ubiquinone oxidoreductase chain 3 (115 aa).

Helical transmembrane passes span 4-24 (IMAM…AFWL), 55-75 (FFLV…LLPL), and 84-104 (MFLT…GLAY).

Belongs to the complex I subunit 3 family. As to quaternary structure, core subunit of respiratory chain NADH dehydrogenase (Complex I) which is composed of 45 different subunits. Interacts with TMEM186. Interacts with TMEM242.

It is found in the mitochondrion inner membrane. It catalyses the reaction a ubiquinone + NADH + 5 H(+)(in) = a ubiquinol + NAD(+) + 4 H(+)(out). Its function is as follows. Core subunit of the mitochondrial membrane respiratory chain NADH dehydrogenase (Complex I) which catalyzes electron transfer from NADH through the respiratory chain, using ubiquinone as an electron acceptor. Essential for the catalytic activity of complex I. The sequence is that of NADH-ubiquinone oxidoreductase chain 3 from Phyllotis darwinii (Darwin's leaf-eared mouse).